The following is a 338-amino-acid chain: S-adenosylmethionine:tRNA ribosyltransferase-isomerase (338 aa).

This sequence belongs to the QueA family. Monomer.

The protein localises to the cytoplasm. It catalyses the reaction 7-aminomethyl-7-carbaguanosine(34) in tRNA + S-adenosyl-L-methionine = epoxyqueuosine(34) in tRNA + adenine + L-methionine + 2 H(+). It functions in the pathway tRNA modification; tRNA-queuosine biosynthesis. Its function is as follows. Transfers and isomerizes the ribose moiety from AdoMet to the 7-aminomethyl group of 7-deazaguanine (preQ1-tRNA) to give epoxyqueuosine (oQ-tRNA). The chain is S-adenosylmethionine:tRNA ribosyltransferase-isomerase from Carboxydothermus hydrogenoformans (strain ATCC BAA-161 / DSM 6008 / Z-2901).